The following is a 170-amino-acid chain: Peptide deformylase (170 aa).

Fe cation-binding residues include cysteine 88 and histidine 130. Glutamate 131 is a catalytic residue. Histidine 134 is a binding site for Fe cation.

Belongs to the polypeptide deformylase family. Fe(2+) serves as cofactor.

It carries out the reaction N-terminal N-formyl-L-methionyl-[peptide] + H2O = N-terminal L-methionyl-[peptide] + formate. In terms of biological role, removes the formyl group from the N-terminal Met of newly synthesized proteins. Requires at least a dipeptide for an efficient rate of reaction. N-terminal L-methionine is a prerequisite for activity but the enzyme has broad specificity at other positions. This Acetivibrio thermocellus (strain ATCC 27405 / DSM 1237 / JCM 9322 / NBRC 103400 / NCIMB 10682 / NRRL B-4536 / VPI 7372) (Clostridium thermocellum) protein is Peptide deformylase.